The following is a 462-amino-acid chain: L-seryl-tRNA(Sec) selenium transferase (462 aa).

An N6-(pyridoxal phosphate)lysine modification is found at K294.

It belongs to the SelA family. In terms of assembly, homodecamer; pentamer of dimers. Binds only one seryl-tRNA(Sec) per dimer. The cofactor is pyridoxal 5'-phosphate.

The protein localises to the cytoplasm. It catalyses the reaction L-seryl-tRNA(Sec) + selenophosphate + H(+) = L-selenocysteinyl-tRNA(Sec) + phosphate. The protein operates within aminoacyl-tRNA biosynthesis; selenocysteinyl-tRNA(Sec) biosynthesis; selenocysteinyl-tRNA(Sec) from L-seryl-tRNA(Sec) (bacterial route): step 1/1. Its function is as follows. Converts seryl-tRNA(Sec) to selenocysteinyl-tRNA(Sec) required for selenoprotein biosynthesis. The protein is L-seryl-tRNA(Sec) selenium transferase of Yersinia pseudotuberculosis serotype O:1b (strain IP 31758).